The chain runs to 153 residues: MSTKEIVKNVNIKNKKASFEYEFLEKYEAGIVLKGTEIKAIRMSKASISEAYCLFDNEELWIKNMNISSYDKGSFYNHDPLSARKLLLRKAELKKLFMHSKEKGLTIIALRLFTNERGYAKIEIALAKGKKLYDKRESIKSKDNEREMQRIRI.

The protein belongs to the SmpB family.

The protein resides in the cytoplasm. Required for rescue of stalled ribosomes mediated by trans-translation. Binds to transfer-messenger RNA (tmRNA), required for stable association of tmRNA with ribosomes. tmRNA and SmpB together mimic tRNA shape, replacing the anticodon stem-loop with SmpB. tmRNA is encoded by the ssrA gene; the 2 termini fold to resemble tRNA(Ala) and it encodes a 'tag peptide', a short internal open reading frame. During trans-translation Ala-aminoacylated tmRNA acts like a tRNA, entering the A-site of stalled ribosomes, displacing the stalled mRNA. The ribosome then switches to translate the ORF on the tmRNA; the nascent peptide is terminated with the 'tag peptide' encoded by the tmRNA and targeted for degradation. The ribosome is freed to recommence translation, which seems to be the essential function of trans-translation. The sequence is that of SsrA-binding protein from Cytophaga hutchinsonii (strain ATCC 33406 / DSM 1761 / CIP 103989 / NBRC 15051 / NCIMB 9469 / D465).